Consider the following 89-residue polypeptide: Small ribosomal subunit protein uS15 (89 aa).

This sequence belongs to the universal ribosomal protein uS15 family. In terms of assembly, part of the 30S ribosomal subunit. Forms a bridge to the 50S subunit in the 70S ribosome, contacting the 23S rRNA.

In terms of biological role, one of the primary rRNA binding proteins, it binds directly to 16S rRNA where it helps nucleate assembly of the platform of the 30S subunit by binding and bridging several RNA helices of the 16S rRNA. Its function is as follows. Forms an intersubunit bridge (bridge B4) with the 23S rRNA of the 50S subunit in the ribosome. This Nitratiruptor sp. (strain SB155-2) protein is Small ribosomal subunit protein uS15.